Reading from the N-terminus, the 475-residue chain is Glutamate--tRNA ligase (475 aa).

The short motif at proline 11 to glycine 21 is the 'HIGH' region element. Positions lysine 240–arginine 244 match the 'KMSKS' region motif. Lysine 243 provides a ligand contact to ATP.

The protein belongs to the class-I aminoacyl-tRNA synthetase family. Glutamate--tRNA ligase type 1 subfamily. Monomer.

Its subcellular location is the cytoplasm. It catalyses the reaction tRNA(Glu) + L-glutamate + ATP = L-glutamyl-tRNA(Glu) + AMP + diphosphate. In terms of biological role, catalyzes the attachment of glutamate to tRNA(Glu) in a two-step reaction: glutamate is first activated by ATP to form Glu-AMP and then transferred to the acceptor end of tRNA(Glu). The sequence is that of Glutamate--tRNA ligase from Bradyrhizobium diazoefficiens (strain JCM 10833 / BCRC 13528 / IAM 13628 / NBRC 14792 / USDA 110).